The sequence spans 47 residues: Large ribosomal subunit protein bL34 (47 aa).

This sequence belongs to the bacterial ribosomal protein bL34 family.

In Rhodococcus erythropolis (strain PR4 / NBRC 100887), this protein is Large ribosomal subunit protein bL34.